We begin with the raw amino-acid sequence, 215 residues long: Cytochrome b6 (215 aa).

A helical transmembrane segment spans residues leucine 32–phenylalanine 52. Cysteine 35 provides a ligand contact to heme c. Heme b is bound by residues histidine 86 and histidine 100. 3 consecutive transmembrane segments (helical) span residues alanine 90–phenylalanine 110, serine 116–tyrosine 136, and leucine 186–isoleucine 206. Residues histidine 187 and histidine 202 each contribute to the heme b site.

The protein belongs to the cytochrome b family. PetB subfamily. The 4 large subunits of the cytochrome b6-f complex are cytochrome b6, subunit IV (17 kDa polypeptide, PetD), cytochrome f and the Rieske protein, while the 4 small subunits are PetG, PetL, PetM and PetN. The complex functions as a dimer. Heme b is required as a cofactor. It depends on heme c as a cofactor.

The protein localises to the plastid. Its subcellular location is the chloroplast thylakoid membrane. Its function is as follows. Component of the cytochrome b6-f complex, which mediates electron transfer between photosystem II (PSII) and photosystem I (PSI), cyclic electron flow around PSI, and state transitions. This Bigelowiella natans (Pedinomonas minutissima) protein is Cytochrome b6.